The primary structure comprises 890 residues: Translation initiation factor IF-2 (890 aa).

The disordered stretch occupies residues 45–304 (LIDHLNQKNS…LQQGFQKPAQ (260 aa)). Over residues 67 to 81 (STLNIPGTGGKSKSV) the composition is skewed to polar residues. The segment covering 92-217 (VKRDPQEAER…RMAEENKWTD (126 aa)) has biased composition (basic and acidic residues). Basic residues predominate over residues 252-266 (GRGRNAKAARPKKGN). A compositionally biased stretch (basic and acidic residues) spans 267–280 (KHAESKADREEARA). The tr-type G domain occupies 389–558 (PRAPVVTIMG…LLQAEVLELK (170 aa)). Positions 398-405 (GHVDHGKT) are G1. GTP is bound at residue 398 to 405 (GHVDHGKT). Positions 423–427 (GITQH) are G2. The interval 444–447 (DTPG) is G3. Residues 444–448 (DTPGH) and 498–501 (NKID) each bind GTP. The G4 stretch occupies residues 498-501 (NKID). A G5 region spans residues 534–536 (SAK). Lys-808 bears the N6-acetyllysine mark.

The protein belongs to the TRAFAC class translation factor GTPase superfamily. Classic translation factor GTPase family. IF-2 subfamily.

Its subcellular location is the cytoplasm. In terms of biological role, one of the essential components for the initiation of protein synthesis. Protects formylmethionyl-tRNA from spontaneous hydrolysis and promotes its binding to the 30S ribosomal subunits. Also involved in the hydrolysis of GTP during the formation of the 70S ribosomal complex. The chain is Translation initiation factor IF-2 from Escherichia coli O127:H6 (strain E2348/69 / EPEC).